The sequence spans 511 residues: Sodium/proline symporter (511 aa).

Helical transmembrane passes span Trp-16–Gly-36, Ile-54–Met-74, Leu-85–Val-105, Ile-139–Ser-159, Gly-175–Val-195, Asp-199–Leu-219, Val-246–Ile-266, Leu-284–Ile-304, Ile-327–Ser-347, Phe-381–Trp-401, Ile-407–Leu-427, Ala-438–Ile-458, and Phe-467–Val-487.

It belongs to the sodium:solute symporter (SSF) (TC 2.A.21) family.

The protein localises to the cell membrane. The enzyme catalyses L-proline(in) + Na(+)(in) = L-proline(out) + Na(+)(out). Catalyzes the sodium-dependent uptake of extracellular L-proline. In Staphylococcus epidermidis (strain ATCC 35984 / DSM 28319 / BCRC 17069 / CCUG 31568 / BM 3577 / RP62A), this protein is Sodium/proline symporter (putP).